An 859-amino-acid polypeptide reads, in one-letter code: DNA (cytosine-5)-methyltransferase 3B (859 aa).

Residues 1 to 305 form an interaction with DNMT1 and DNMT3A region; sequence MKGDSRHLNE…LATFNKLVSY (305 aa). The disordered stretch occupies residues 25-226; it reads GNFSDQSSDT…RDGDSTEYQD (202 aa). Residues 85-94 are compositionally biased toward acidic residues; sequence DRDDEVDDGN. Ser-96 is modified (phosphoserine). Lys-102 participates in a covalent cross-link: Glycyl lysine isopeptide (Lys-Gly) (interchain with G-Cter in SUMO2). The span at 103-114 shows a compositional bias: basic and acidic residues; it reads LTRETKDTRTRS. A Phosphothreonine modification is found at Thr-112. Ser-116 is modified (phosphoserine). Over residues 167-179 the composition is skewed to low complexity; it reads SSSASTPWSSPAS. Polar residues predominate over residues 189-198; that stretch reads KSVSTPSVDL. Residues 214-226 are compositionally biased toward basic and acidic residues; sequence AESRDGDSTEYQD. The residue at position 216 (Ser-216) is a Phosphoserine. The region spanning 232-290 is the PWWP domain; it reads IGDLVWGKIKGFSWWPAMVVSWKATSKRQAMPGMRWVQWFGDGKFSEISADKLVALGLF. Positions 348-429 are disordered; the sequence is KPTGIEGLKP…ESRERMASEV (82 aa). Basic and acidic residues-rich tracts occupy residues 370–381 and 412–426; these read RRSDSRNLEPRR and GKDR…ERMA. Citrulline is present on Arg-415. An ADD domain is found at 428 to 560; sequence EVTNNKGNLE…LQDFFTTDPD (133 aa). The GATA-type; atypical zinc finger occupies 439–469; the sequence is RCLSCGKKNPVSFHPLFEGGLCQSCRDRFLE. The tract at residues 440–532 is interaction with the PRC2/EED-EZH2 complex; sequence CLSCGKKNPV…LQEPWSCYMC (93 aa). Residues 480–536 form a PHD-type; atypical zinc finger; the sequence is QSYCTVCCEGRELLLCSNTSCCRCFCVECLEVLVGAGTAEDAKLQEPWSCYMCLPQR. The SAM-dependent MTase C5-type domain maps to 581–859; that stretch reads IRVLSLFDGI…APLKDYFACE (279 aa). S-adenosyl-L-methionine is bound by residues 588–592 and Glu-611; that span reads DGIAT. Residue Lys-623 forms a Glycyl lysine isopeptide (Lys-Gly) (interchain with G-Cter in SUMO2) linkage. 633–635 serves as a coordination point for S-adenosyl-L-methionine; sequence DVR. Cys-657 is an active-site residue. 838-840 is a binding site for S-adenosyl-L-methionine; it reads RSW.

Belongs to the class I-like SAM-binding methyltransferase superfamily. C5-methyltransferase family. Interacts with CBX4, DNMT1, DNMT3A, SETDB1, UBE2I9, UBL1 and ZHX1. Interacts with SUV39H1 and BAZ2A/TIP5. Interacts with the PRC2/EED-EZH2 complex. Interacts with UHRF1. Sumoylated. In terms of processing, citrullinated by PADI4.

Its subcellular location is the nucleus. The catalysed reaction is a 2'-deoxycytidine in DNA + S-adenosyl-L-methionine = a 5-methyl-2'-deoxycytidine in DNA + S-adenosyl-L-homocysteine + H(+). Activated by binding to the regulatory factor DNMT3L. Its function is as follows. Required for genome-wide de novo methylation and is essential for the establishment of DNA methylation patterns during development. DNA methylation is coordinated with methylation of histones. May preferentially methylates nucleosomal DNA within the nucleosome core region. May function as transcriptional co-repressor by associating with CBX4 and independently of DNA methylation. Seems to be involved in gene silencing. In association with DNMT1 and via the recruitment of CTCFL/BORIS, involved in activation of BAG1 gene expression by modulating dimethylation of promoter histone H3 at H3K4 and H3K9. Functions as a transcriptional corepressor by associating with ZHX1. Required for DUX4 silencing in somatic cells. This Mus musculus (Mouse) protein is DNA (cytosine-5)-methyltransferase 3B (Dnmt3b).